A 385-amino-acid polypeptide reads, in one-letter code: Carbamoyl phosphate synthase small chain (385 aa).

Residues 1 to 185 are CPSase; that stretch reads MSEPAILVLA…LGKGFIEQTQ (185 aa). Residues serine 47, glycine 237, and glycine 239 each contribute to the L-glutamine site. In terms of domain architecture, Glutamine amidotransferase type-1 spans 189 to 376; that stretch reads NVVAYDFGVK…INEMRKANLS (188 aa). Cysteine 265 (nucleophile) is an active-site residue. The L-glutamine site is built by leucine 266, glutamine 269, asparagine 307, glycine 309, and phenylalanine 310. Catalysis depends on residues histidine 349 and glutamate 351.

The protein belongs to the CarA family. As to quaternary structure, composed of two chains; the small (or glutamine) chain promotes the hydrolysis of glutamine to ammonia, which is used by the large (or ammonia) chain to synthesize carbamoyl phosphate. Tetramer of heterodimers (alpha,beta)4.

The catalysed reaction is hydrogencarbonate + L-glutamine + 2 ATP + H2O = carbamoyl phosphate + L-glutamate + 2 ADP + phosphate + 2 H(+). It carries out the reaction L-glutamine + H2O = L-glutamate + NH4(+). Its pathway is amino-acid biosynthesis; L-arginine biosynthesis; carbamoyl phosphate from bicarbonate: step 1/1. The protein operates within pyrimidine metabolism; UMP biosynthesis via de novo pathway; (S)-dihydroorotate from bicarbonate: step 1/3. Small subunit of the glutamine-dependent carbamoyl phosphate synthetase (CPSase). CPSase catalyzes the formation of carbamoyl phosphate from the ammonia moiety of glutamine, carbonate, and phosphate donated by ATP, constituting the first step of 2 biosynthetic pathways, one leading to arginine and/or urea and the other to pyrimidine nucleotides. The small subunit (glutamine amidotransferase) binds and cleaves glutamine to supply the large subunit with the substrate ammonia. The protein is Carbamoyl phosphate synthase small chain of Pasteurella multocida (strain Pm70).